A 1044-amino-acid chain; its full sequence is Unconventional myosin-Ic (1044 aa).

Residues 28-712 form the Myosin motor domain; the sequence is GVQDFVLLEN…TLFATEDSLE (685 aa). Residues N69, Y77, 120-129, and 173-177 each bind ATP; these read SGESGAGKTE and NDNSS. N6-methyllysine is present on K364. S389 carries the post-translational modification Phosphoserine. At K467 the chain carries N6-acetyllysine. S517 carries the post-translational modification Phosphoserine. Residues 589–611 form an actin-binding region; it reads LLQLVEILRSKEPAYIRCIKPND. 2 consecutive IQ domains span residues 715 to 744 and 738 to 767; these read RQSL…SAIC and VKRS…AAQT. Residues S845 and S1022 each carry the phosphoserine modification. In terms of domain architecture, TH1 spans 866–1040; that stretch reads KDNYPQSVPR…NGHLAVVAPR (175 aa).

It belongs to the TRAFAC class myosin-kinesin ATPase superfamily. Myosin family. In terms of assembly, interacts (via its IQ motifs) with CABP1 and CIB1; the interaction with CABP1 and CIB1 is calcium-dependent. Interacts (via tail domain) with PLEKHB1 (via PH domain); the interaction is not affected by the presence or absence of calcium and CALM. Interacts with POLR1A. Interacts with POLR2A. Component of the B-WICH complex, at least composed of SMARCA5/SNF2H, BAZ1B/WSTF, SF3B1, DEK, MYO1C, ERCC6, MYBBP1A and DDX21. Interacts (via its IQ motifs) with CALM; this precludes interaction with YWHAB. Interacts with YWHAB; this precludes interaction with CALM. Interacts with RPS6. Interacts with actin. Interacts with LLPH. Interacts with GLUT4. Interacts (via its IQ motifs) with SH3BGRL3; the interaction is dependent on calcium and takes place at membrane ruffles.

The protein resides in the cytoplasm. It localises to the nucleus. It is found in the cell cortex. The protein localises to the cell projection. Its subcellular location is the stereocilium membrane. The protein resides in the cytoplasmic vesicle. It localises to the ruffle membrane. Its function is as follows. Myosins are actin-based motor molecules with ATPase activity. Unconventional myosins serve in intracellular movements. Their highly divergent tails are presumed to bind to membranous compartments, which would be moved relative to actin filaments. Involved in glucose transporter recycling in response to insulin by regulating movement of intracellular GLUT4-containing vesicles to the plasma membrane. Component of the hair cell's (the sensory cells of the inner ear) adaptation-motor complex. Acts as a mediator of adaptation of mechanoelectrical transduction in stereocilia of vestibular hair cells. Binds phosphoinositides and links the actin cytoskeleton to cellular membranes. This is Unconventional myosin-Ic (Myo1c) from Rattus norvegicus (Rat).